The sequence spans 332 residues: Ketol-acid reductoisomerase (NADP(+)) (332 aa).

Positions Met1 to Thr182 constitute a KARI N-terminal Rossmann domain. NADP(+) contacts are provided by residues Tyr25–Gln28, Lys48, Ser53, and Asp83–Gln86. The active site involves His108. Gly134 contributes to the NADP(+) binding site. The region spanning Thr183–Asp329 is the KARI C-terminal knotted domain. Asp191, Glu195, Glu227, and Glu231 together coordinate Mg(2+). Substrate is bound at residue Ser252.

The protein belongs to the ketol-acid reductoisomerase family. Mg(2+) is required as a cofactor.

It catalyses the reaction (2R)-2,3-dihydroxy-3-methylbutanoate + NADP(+) = (2S)-2-acetolactate + NADPH + H(+). The enzyme catalyses (2R,3R)-2,3-dihydroxy-3-methylpentanoate + NADP(+) = (S)-2-ethyl-2-hydroxy-3-oxobutanoate + NADPH + H(+). It participates in amino-acid biosynthesis; L-isoleucine biosynthesis; L-isoleucine from 2-oxobutanoate: step 2/4. It functions in the pathway amino-acid biosynthesis; L-valine biosynthesis; L-valine from pyruvate: step 2/4. Its function is as follows. Involved in the biosynthesis of branched-chain amino acids (BCAA). Catalyzes an alkyl-migration followed by a ketol-acid reduction of (S)-2-acetolactate (S2AL) to yield (R)-2,3-dihydroxy-isovalerate. In the isomerase reaction, S2AL is rearranged via a Mg-dependent methyl migration to produce 3-hydroxy-3-methyl-2-ketobutyrate (HMKB). In the reductase reaction, this 2-ketoacid undergoes a metal-dependent reduction by NADPH to yield (R)-2,3-dihydroxy-isovalerate. This is Ketol-acid reductoisomerase (NADP(+)) from Cenarchaeum symbiosum (strain A).